A 1196-amino-acid chain; its full sequence is Cingulin (1196 aa).

The interval 7-354 (MAEPRGPVDH…LVMTSGSAKG (348 aa)) is head. Positions 48–62 (ANTYGVAVRVQGIAG) match the ZIM motif. Residues 54–67 (AVRVQGIAGQPFVV) form an interaction with TJP1/ZO1 region. The segment at 82–105 (IKGTNNRGPPGALSSDSELPESTY) is disordered. Phosphoserine is present on residues Ser95, Ser96, Ser98, Ser135, Ser137, Ser140, Ser155, Ser165, and Ser214. Over residues 95 to 105 (SSDSELPESTY) the composition is skewed to polar residues. Residues 183 to 263 (NKFDSRQGGQ…NQGPLGGFSC (81 aa)) form a disordered region. Over residues 218–231 (RLPRDTLDEREHQF) the composition is skewed to basic and acidic residues. The segment covering 245-256 (MGNSKQSSQNQG) has biased composition (polar residues). Ser274 is subject to Phosphoserine. Residues 355-1150 (LTGQSELSQK…ARIKTLEKDS (796 aa)) are a coiled coil. The residue at position 576 (Lys576) is an N6-acetyllysine. Basic and acidic residues predominate over residues 884-897 (AQRQAKEWATEAEK). Disordered stretches follow at residues 884 to 906 (AQRQ…SRLQ), 1023 to 1061 (DLKS…EERE), and 1149 to 1174 (DSWR…EEFD). Low complexity predominate over residues 1038–1050 (SASLSQLESQNQE). A compositionally biased stretch (basic and acidic residues) spans 1051 to 1061 (LQERLQAEERE). The tail stretch occupies residues 1155–1196 (SRSAAESAQREGLSSDEEFDSVYDPSSIASLLTESNLQTSSC). Residues Ser1168, Ser1169, and Ser1175 each carry the phosphoserine modification.

It belongs to the cingulin family. As to quaternary structure, homodimer. Interacts with TJP1/ZO1 and SPEF1.

The protein localises to the cell junction. The protein resides in the tight junction. In terms of biological role, probably plays a role in the formation and regulation of the tight junction (TJ) paracellular permeability barrier. In Canis lupus familiaris (Dog), this protein is Cingulin.